The sequence spans 173 residues: Large ribosomal subunit protein uL10 (173 aa).

It belongs to the universal ribosomal protein uL10 family. In terms of assembly, part of the ribosomal stalk of the 50S ribosomal subunit. The N-terminus interacts with L11 and the large rRNA to form the base of the stalk. The C-terminus forms an elongated spine to which L12 dimers bind in a sequential fashion forming a multimeric L10(L12)X complex.

In terms of biological role, forms part of the ribosomal stalk, playing a central role in the interaction of the ribosome with GTP-bound translation factors. The protein is Large ribosomal subunit protein uL10 (rplJ) of Synechocystis sp. (strain ATCC 27184 / PCC 6803 / Kazusa).